A 217-amino-acid polypeptide reads, in one-letter code: tRNA (guanine-N(7)-)-methyltransferase (217 aa).

S-adenosyl-L-methionine-binding residues include glutamate 48, glutamate 73, asparagine 100, and aspartate 123. Aspartate 123 is a catalytic residue. Substrate contacts are provided by lysine 127 and aspartate 159.

This sequence belongs to the class I-like SAM-binding methyltransferase superfamily. TrmB family.

It carries out the reaction guanosine(46) in tRNA + S-adenosyl-L-methionine = N(7)-methylguanosine(46) in tRNA + S-adenosyl-L-homocysteine. Its pathway is tRNA modification; N(7)-methylguanine-tRNA biosynthesis. In terms of biological role, catalyzes the formation of N(7)-methylguanine at position 46 (m7G46) in tRNA. The sequence is that of tRNA (guanine-N(7)-)-methyltransferase from Leptospira interrogans serogroup Icterohaemorrhagiae serovar copenhageni (strain Fiocruz L1-130).